The chain runs to 307 residues: Protease HtpX homolog 1 (307 aa).

Helical transmembrane passes span 7–27 (LKTLMFLSGTLTIIAEGIITY) and 38–60 (IFTAIFLVILWLIQWLIAPYLVG). A Zn(2+)-binding site is contributed by His133. Glu134 is a catalytic residue. A Zn(2+)-binding site is contributed by His137. Transmembrane regions (helical) follow at residues 145–165 (IGMALGLIPTIIGYVGNFLLF) and 180–200 (LILGLAMLAIGGVLFVLTFLL). Glu212 lines the Zn(2+) pocket.

It belongs to the peptidase M48B family. Requires Zn(2+) as cofactor.

It is found in the cell membrane. The protein is Protease HtpX homolog 1 of Sulfolobus acidocaldarius (strain ATCC 33909 / DSM 639 / JCM 8929 / NBRC 15157 / NCIMB 11770).